Here is a 175-residue protein sequence, read N- to C-terminus: uncharacterized protein (175 aa).

Positions 1 to 10 (MSKKINNNKT) are enriched in polar residues. Positions 1-21 (MSKKINNNKTPRNKVKNNNVS) are disordered.

This is an uncharacterized protein from Ureaplasma parvum serovar 3 (strain ATCC 700970).